We begin with the raw amino-acid sequence, 293 residues long: ATP synthase subunit gamma, mitochondrial (293 aa).

Residues methionine 1–tyrosine 21 constitute a mitochondrion transit peptide.

F-type ATP synthases have 2 components, the catalytic core F(1) and the membrane-embedded component F(0), linked together by a central stalk and a peripheral stalk. The central stalk, also called rotor shaft, is often seen as part of F(1). The peripheral stalk is seen as part of F(0). F(0) contains the membrane channel next to the rotor. F-type ATP synthases form dimers but each monomer functions independently in ATP generation. The dimer consists of 17 different polypeptides: ATP1 (subunit alpha, 3 molecules per monomer, part of F(1)), ATP2 (subunit beta, 3 copies per monomer, part of F(1)), ATP3 (subunit gamma, part of the central stalk), ATP4 (subunit b, part of the peripheral stalk), ATP5/OSCP (subunit 5/OSCP, part of the peripheral stalk), ATP6 (subunit a, part of the peripheral stalk), ATP7 (subunit d, part of the peripheral stalk), ATP8 (subunit 8, part of the peripheral stalk), OLI1 (subunit c, part of the rotor, 10 molecules per monomer), ATP14 (subunit h, part of the peripheral stalk), ATP15 (subunit epsilon, part of the central stalk), ATP16 (subunit delta, part of the central stalk), ATP17 (subunit f, part of the peripheral stalk), ATP18 (subunit i/j, part of the peripheral stalk), ATP19 (subunit k, dimer-specific, at interface between monomers), ATP20 (subunit g, at interface between monomers), TIM11 (subunit e, at interface between monomers).

It localises to the mitochondrion inner membrane. In terms of biological role, mitochondrial membrane ATP synthase (F(1)F(0) ATP synthase or Complex V) produces ATP from ADP in the presence of a proton gradient across the membrane which is generated by electron transport complexes of the respiratory chain. F-type ATP synthases consist of two structural domains, F(1) - containing the extramembraneous catalytic core, and F(0) - containing the membrane proton channel, linked together by a central stalk and a peripheral stalk. During catalysis, ATP synthesis in the catalytic domain of F(1) is coupled via a rotary mechanism of the central stalk subunits to proton translocation. Part of the complex F(1) domain and the central stalk which is part of the complex rotary element. The gamma/ATP3 subunit protrudes into the catalytic domain formed of alpha/ATP1(3)beta/ATP2(3). Rotation of the central stalk against the surrounding alpha/ATP1(3)beta/ATP2(3) subunits leads to hydrolysis of ATP in three separate catalytic sites on the beta/ATP2 subunits. The protein is ATP synthase subunit gamma, mitochondrial of Yarrowia lipolytica (strain CLIB 122 / E 150) (Yeast).